The following is a 162-amino-acid chain: UPF0114 protein Pput_0713 (162 aa).

Transmembrane regions (helical) follow at residues 15–35 (LLAPIYFGLSLGLLALALKFF), 53–73 (LILVILSLIDMSLVGGLLVMV), 109–126 (VAASIVAISSIHLLRVFM), and 136–156 (LMWYVIIHMTFVVSAFCMGYL).

Belongs to the UPF0114 family.

It is found in the cell membrane. In Pseudomonas putida (strain ATCC 700007 / DSM 6899 / JCM 31910 / BCRC 17059 / LMG 24140 / F1), this protein is UPF0114 protein Pput_0713.